Here is a 413-residue protein sequence, read N- to C-terminus: uncharacterized protein (413 aa).

A signal peptide spans 1–20 (MRVIIVIMMVVFVVVGTSSG).

This is an uncharacterized protein from Archaeoglobus fulgidus (strain ATCC 49558 / DSM 4304 / JCM 9628 / NBRC 100126 / VC-16).